We begin with the raw amino-acid sequence, 283 residues long: Bifunctional protein FolD (283 aa).

Residues 166-168 (GRS), Ser-191, and Thr-232 contribute to the NADP(+) site.

Belongs to the tetrahydrofolate dehydrogenase/cyclohydrolase family. As to quaternary structure, homodimer.

The enzyme catalyses (6R)-5,10-methylene-5,6,7,8-tetrahydrofolate + NADP(+) = (6R)-5,10-methenyltetrahydrofolate + NADPH. The catalysed reaction is (6R)-5,10-methenyltetrahydrofolate + H2O = (6R)-10-formyltetrahydrofolate + H(+). It functions in the pathway one-carbon metabolism; tetrahydrofolate interconversion. Its function is as follows. Catalyzes the oxidation of 5,10-methylenetetrahydrofolate to 5,10-methenyltetrahydrofolate and then the hydrolysis of 5,10-methenyltetrahydrofolate to 10-formyltetrahydrofolate. The chain is Bifunctional protein FolD from Halothermothrix orenii (strain H 168 / OCM 544 / DSM 9562).